A 408-amino-acid chain; its full sequence is Probable acyl-CoA dehydrogenase 6 (408 aa).

The active-site Proton acceptor is Glu-265.

The protein belongs to the acyl-CoA dehydrogenase family. Homotetramer. FAD serves as cofactor.

The catalysed reaction is 3-methylbutanoyl-CoA + oxidized [electron-transfer flavoprotein] + H(+) = 3-methylbut-2-enoyl-CoA + reduced [electron-transfer flavoprotein]. The protein operates within amino-acid degradation; L-leucine degradation; (S)-3-hydroxy-3-methylglutaryl-CoA from 3-isovaleryl-CoA: step 1/3. The polypeptide is Probable acyl-CoA dehydrogenase 6 (acdh-6) (Caenorhabditis elegans).